Reading from the N-terminus, the 378-residue chain is Beta-1,3-galactosyltransferase pvg3 (378 aa).

Residues M1–K8 lie on the Cytoplasmic side of the membrane. The chain crosses the membrane as a helical; Signal-anchor for type II membrane protein span at residues I9–N29. Residues R30 to V378 are Lumenal-facing. Residues N53, N97, N180, and N354 are each glycosylated (N-linked (GlcNAc...) asparagine).

This sequence belongs to the glycosyltransferase 31 family.

Its subcellular location is the endoplasmic reticulum membrane. The protein resides in the golgi apparatus. The protein localises to the golgi stack membrane. It catalyses the reaction 3-O-(beta-D-galactosyl-(1-&gt;4)-beta-D-xylosyl)-L-seryl-[protein] + UDP-alpha-D-galactose = 3-O-(beta-D-galactosyl-(1-&gt;3)-beta-D-galactosyl-(1-&gt;4)-beta-D-xylosyl)-L-seryl-[protein] + UDP + H(+). Involved in cell wall biogenesis. Has a role in the addition of Gal-beta1,3 moeities to galactomannans and their subsequent pyruvylation. Has a role in meiosis. This is Beta-1,3-galactosyltransferase pvg3 (pvg3) from Schizosaccharomyces pombe (strain 972 / ATCC 24843) (Fission yeast).